Consider the following 314-residue polypeptide: Olfactory receptor 14K1 (314 aa).

At 1–23 the chain is on the extracellular side; the sequence is MTNQTQMMEFLLVRFTENWVLLR. Asn-3 carries an N-linked (GlcNAc...) asparagine glycan. Residues 24 to 44 form a helical membrane-spanning segment; that stretch reads LHALLFSLIYLTAVLMNLVII. Residues 45-52 lie on the Cytoplasmic side of the membrane; it reads LLMILDHR. A helical transmembrane segment spans residues 53–73; sequence LHMAMYFFLRHLSFLDLCLIS. Over 74 to 97 the chain is Extracellular; the sequence is ATVPKSILNSVASTDSISFLGCVL. Cys-95 and Cys-187 are disulfide-bonded. The helical transmembrane segment at 98–118 threads the bilayer; it reads QLFLVVLLAGSEIGILTAMSY. At 119 to 131 the chain is on the cytoplasmic side; the sequence is DRYAAICCPLHCE. Residues 132–152 traverse the membrane as a helical segment; it reads AVMSRGLCVQLMALSWLNRGA. Topologically, residues 153 to 194 are extracellular; that stretch reads LGLLYTAGTFSLNFYGSDELHQFFCDVPALLKLTCSKEHAII. A helical transmembrane segment spans residues 195–215; the sequence is SVSVAIGVCYAFSCLVCIVVS. Topologically, residues 216-235 are cytoplasmic; that stretch reads YVYIFSAVLRISQRQRQSKA. Residues 236–256 form a helical membrane-spanning segment; that stretch reads FSNCVPHLIVVTVFLVTGAVA. Over 257-269 the chain is Extracellular; it reads YLKPGSDAPSILD. Residues 270 to 290 form a helical membrane-spanning segment; sequence LLVSVFYSVAPPTLNPVIYCL. Residues 291 to 314 are Cytoplasmic-facing; it reads KNKDIKSALSKVLWNVRSSGVMKR.

The protein belongs to the G-protein coupled receptor 1 family.

The protein localises to the cell membrane. In terms of biological role, odorant receptor. This chain is Olfactory receptor 14K1 (OR14K1), found in Homo sapiens (Human).